A 494-amino-acid polypeptide reads, in one-letter code: Probable cytochrome P450 313a4 (494 aa).

Residue Cys440 participates in heme binding.

It belongs to the cytochrome P450 family. Heme serves as cofactor.

The protein localises to the endoplasmic reticulum membrane. It is found in the microsome membrane. In terms of biological role, may be involved in the metabolism of insect hormones and in the breakdown of synthetic insecticides. The protein is Probable cytochrome P450 313a4 (Cyp313a4) of Drosophila melanogaster (Fruit fly).